We begin with the raw amino-acid sequence, 423 residues long: Sphingomyelin phosphodiesterase 2 (423 aa).

Position 49 (glutamate 49) interacts with Mg(2+). Residue histidine 272 is the Proton acceptor of the active site. Transmembrane regions (helical) follow at residues 330-350 (VIGLGLLLLALLCVLAAGGGA) and 354-374 (AILLWTPSVGLVLWAGAFYLF). Positions 400-423 (QDLGPEPQPALLLGQQEGDRTKEQ) are disordered.

This sequence belongs to the neutral sphingomyelinase family. Mg(2+) is required as a cofactor.

It is found in the cell membrane. It catalyses the reaction a sphingomyelin + H2O = phosphocholine + an N-acylsphing-4-enine + H(+). It carries out the reaction an N-(acyl)-sphingosylphosphocholine + H2O = an N-acyl-sphingoid base + phosphocholine + H(+). The enzyme catalyses 1-O-octadecyl-sn-glycero-3-phosphocholine + H2O = 1-O-octadecyl-sn-glycerol + phosphocholine + H(+). The catalysed reaction is 1-O-hexadecyl-sn-glycero-3-phosphocholine + H2O = 1-O-hexadecyl-sn-glycerol + phosphocholine + H(+). It catalyses the reaction 1-hexadecanoyl-sn-glycero-3-phosphocholine + H2O = 1-hexadecanoyl-sn-glycerol + phosphocholine + H(+). It carries out the reaction a sphingosylphosphocholine + H2O = a sphingoid base + phosphocholine + H(+). Its pathway is lipid metabolism; sphingolipid metabolism. In terms of biological role, catalyzes, at least in vitro, the hydrolysis of sphingomyelin to form ceramide and phosphocholine. Also hydrolyzes 1-O-alkyl-2-lyso-sn-glycero-3-phosphocholine (lyso-platelet-activating factor) in vivo. Also acts on 1-acyl-2-lyso-sn-glycero-3-phosphocholine (lyso-PC) and sphingosylphosphocholine. The chain is Sphingomyelin phosphodiesterase 2 from Homo sapiens (Human).